The sequence spans 251 residues: Probable transcriptional regulatory protein DET0444 (251 aa).

Belongs to the TACO1 family.

It is found in the cytoplasm. This chain is Probable transcriptional regulatory protein DET0444, found in Dehalococcoides mccartyi (strain ATCC BAA-2266 / KCTC 15142 / 195) (Dehalococcoides ethenogenes (strain 195)).